Reading from the N-terminus, the 410-residue chain is D-amino acid dehydrogenase (410 aa).

Gly9–Gly14 is an FAD binding site.

Belongs to the DadA oxidoreductase family. It depends on FAD as a cofactor.

The protein resides in the cell inner membrane. It catalyses the reaction a D-alpha-amino acid + a quinone + H2O = a 2-oxocarboxylate + a quinol + NH4(+). Catalyzes the oxidative deamination of D-amino acids. Has broad substrate specificity; is mostly active on D-proline, and to a lesser extent, on several other D-amino acids such as D-alanine, D-phenylalanine and D-serine. Mediates electron transport from D-proline to coenzyme Q1 in vitro, and is involved in the electron transport chain from D-proline to the c-type cytochrome in vivo. In Helicobacter pylori (strain ATCC 700392 / 26695) (Campylobacter pylori), this protein is D-amino acid dehydrogenase.